A 308-amino-acid chain; its full sequence is Nodulation protein D 1 (308 aa).

Positions 6-63 (LDLNLLVALDALMTERNLTAAARSINLSQPAMSAAVGRLRVYFEDELFTMNGRELVLT) constitute an HTH lysR-type domain. A DNA-binding region (H-T-H motif) is located at residues 23-42 (LTAAARSINLSQPAMSAAVG).

It belongs to the LysR transcriptional regulatory family.

Functionally, nodD regulates the expression of the nodABCFE genes which encode other nodulation proteins. NodD is also a negative regulator of its own expression. Binds flavonoids as inducers. This Rhizobium tropici protein is Nodulation protein D 1 (nodD1).